The following is a 194-amino-acid chain: Probable RNA polymerase sigma factor HI_1459 (194 aa).

Residues 45-58 (DLVQEAFLSAFKNL) carry the Polymerase core binding motif. The segment at residues 161–180 (SEEICQETHLTSSNLHTTLY) is a DNA-binding region (H-T-H motif).

The protein belongs to the sigma-70 factor family. ECF subfamily.

This is Probable RNA polymerase sigma factor HI_1459 from Haemophilus influenzae (strain ATCC 51907 / DSM 11121 / KW20 / Rd).